The sequence spans 215 residues: Phosphatidylserine decarboxylase proenzyme (215 aa).

Ser-186 serves as the catalytic Schiff-base intermediate with substrate; via pyruvic acid. A Pyruvic acid (Ser); by autocatalysis modification is found at Ser-186.

The protein belongs to the phosphatidylserine decarboxylase family. PSD-A subfamily. In terms of assembly, heterodimer of a large membrane-associated beta subunit and a small pyruvoyl-containing alpha subunit. Pyruvate serves as cofactor. Is synthesized initially as an inactive proenzyme. Formation of the active enzyme involves a self-maturation process in which the active site pyruvoyl group is generated from an internal serine residue via an autocatalytic post-translational modification. Two non-identical subunits are generated from the proenzyme in this reaction, and the pyruvate is formed at the N-terminus of the alpha chain, which is derived from the carboxyl end of the proenzyme. The post-translation cleavage follows an unusual pathway, termed non-hydrolytic serinolysis, in which the side chain hydroxyl group of the serine supplies its oxygen atom to form the C-terminus of the beta chain, while the remainder of the serine residue undergoes an oxidative deamination to produce ammonia and the pyruvoyl prosthetic group on the alpha chain.

The protein localises to the cell membrane. It catalyses the reaction a 1,2-diacyl-sn-glycero-3-phospho-L-serine + H(+) = a 1,2-diacyl-sn-glycero-3-phosphoethanolamine + CO2. It functions in the pathway phospholipid metabolism; phosphatidylethanolamine biosynthesis; phosphatidylethanolamine from CDP-diacylglycerol: step 2/2. In terms of biological role, catalyzes the formation of phosphatidylethanolamine (PtdEtn) from phosphatidylserine (PtdSer). This chain is Phosphatidylserine decarboxylase proenzyme, found in Pelagibacter ubique (strain HTCC1062).